The chain runs to 441 residues: METQCRPQVRCLDPIQGKETRVTVIVRGRAIVAVEDDSYPIPADAAVIPGENLLLAPSLADLYSYSGEPGYEDRETLSQLVKTAIAGGFGDVAILPNTDPPLDQPQTLQWLKQRLNQIEGVNAHHQPPGDPQAENRPDSAPVQCHWWGSVTQGNQGKQLTEWGELDQAGVIGFSDGGAIQDWRLLQRALEYGAIAGKPLALVPLNLSLRGNGVMREGPLAIQLGLPPDPVMSEAAVIASLLELLPHYGTPVHFMRISTARGVELIVQAKSQGLNCTASVNWHHLLLSNEAIAHGLPPHTPHYDPNLRFDPPLGNEGDRLALIEGVKSGVIDAIAVDHQAFTYEEKTQTFAETPPGAIGYELVLPCLWQGLVEKNLITPMALWRALSTNPRRCLGLPEVSNSRILFDPDQAWTLKRGTLQTSAYNSPWWNHSLKGRVVAWES.

Residues Val121 to Ala140 form a disordered region.

The protein belongs to the metallo-dependent hydrolases superfamily. DHOase family. PyrC' subfamily.

Functionally, non-functional DHOase. The polypeptide is Probable dihydroorotase-like protein (pyrC') (Synechocystis sp. (strain ATCC 27184 / PCC 6803 / Kazusa)).